The primary structure comprises 1761 residues: Nonribosomal peptide synthetase 6 (1761 aa).

Positions 63 to 468 are adenylation; it reads ERAALHPEKI…GRQDQQVKLR (406 aa). A Carrier 1 domain is found at 600 to 675; it reads EATTEMELKL…SMAEKAKPVS (76 aa). Serine 636 is subject to O-(pantetheine 4'-phosphoryl)serine. The tract at residues 712–1135 is condensation 1; sequence VEDVYPCTPL…AVLDPVEAQD (424 aa). Carrier domains follow at residues 1169–1242 and 1237–1313; these read SPNE…SNER and SASN…EEET. 2 positions are modified to O-(pantetheine 4'-phosphoryl)serine: serine 1203 and serine 1274. The segment at 1354–1677 is condensation 2; the sequence is IYPTRPLQQL…ESVQWFDTVV (324 aa).

It belongs to the NRP synthetase family.

It participates in siderophore biosynthesis. In terms of biological role, nonribosomal peptide synthetase; part of the gene cluster that mediates the biosynthesis of hydroxamate-containing siderophores that play a critical role in virulence. Cochliobolus heterostrophus produces extracellular coprogen-type siderophores including coprogen, neocoprogen I and neocoprogen II, as well as the intracellular siderophore ferricrocin. The role of extracellular siderophores is to supply iron to the fungus during plant infection, and the intracellular ferricrocin is required for intracellular iron distribution and storage with a crucial role in ascus and ascospore development. SIDA2 catalyzes the conversion of L-ornithine to N(5)-hydroxyornithine, the first step in the biosynthesis of all hydroxamate-containing siderophores. The assembly of extracellular coprogen-type siderophores is then performed by the nonribosomal peptide synthetase (NRPS) NPS6 whereas the intracellular siderophore ferricrocin is assembled by NPS2. The chain is Nonribosomal peptide synthetase 6 from Cochliobolus heterostrophus (strain C4 / ATCC 48331 / race T) (Southern corn leaf blight fungus).